A 524-amino-acid chain; its full sequence is Bifunctional purine biosynthesis protein PurH (524 aa).

The MGS-like domain maps to 1-145; that stretch reads MIQQALLSVS…KNHRDVTVIV (145 aa).

It belongs to the PurH family.

It catalyses the reaction (6R)-10-formyltetrahydrofolate + 5-amino-1-(5-phospho-beta-D-ribosyl)imidazole-4-carboxamide = 5-formamido-1-(5-phospho-D-ribosyl)imidazole-4-carboxamide + (6S)-5,6,7,8-tetrahydrofolate. The enzyme catalyses IMP + H2O = 5-formamido-1-(5-phospho-D-ribosyl)imidazole-4-carboxamide. It participates in purine metabolism; IMP biosynthesis via de novo pathway; 5-formamido-1-(5-phospho-D-ribosyl)imidazole-4-carboxamide from 5-amino-1-(5-phospho-D-ribosyl)imidazole-4-carboxamide (10-formyl THF route): step 1/1. Its pathway is purine metabolism; IMP biosynthesis via de novo pathway; IMP from 5-formamido-1-(5-phospho-D-ribosyl)imidazole-4-carboxamide: step 1/1. The chain is Bifunctional purine biosynthesis protein PurH from Ralstonia nicotianae (strain ATCC BAA-1114 / GMI1000) (Ralstonia solanacearum).